The chain runs to 496 residues: Probable cytosol aminopeptidase (496 aa).

K262 and D267 together coordinate Mn(2+). K274 is a catalytic residue. Mn(2+) contacts are provided by D285, D344, and E346. Residue R348 is part of the active site.

It belongs to the peptidase M17 family. Mn(2+) is required as a cofactor.

It is found in the cytoplasm. The enzyme catalyses Release of an N-terminal amino acid, Xaa-|-Yaa-, in which Xaa is preferably Leu, but may be other amino acids including Pro although not Arg or Lys, and Yaa may be Pro. Amino acid amides and methyl esters are also readily hydrolyzed, but rates on arylamides are exceedingly low.. It carries out the reaction Release of an N-terminal amino acid, preferentially leucine, but not glutamic or aspartic acids.. Its function is as follows. Presumably involved in the processing and regular turnover of intracellular proteins. Catalyzes the removal of unsubstituted N-terminal amino acids from various peptides. The polypeptide is Probable cytosol aminopeptidase (Rhizobium johnstonii (strain DSM 114642 / LMG 32736 / 3841) (Rhizobium leguminosarum bv. viciae)).